The primary structure comprises 127 residues: Fluoride-specific ion channel FluC (127 aa).

4 helical membrane passes run 4–24 (LDYLTIAFGGAIGAVLRYLVS), 39–59 (GTIIVNSVGSFFLSFLMFAAI), 68–88 (AILFFGTGLLGAFTTFSTFTY), and 102–122 (VAYALANLLFAFTCAYFGMIL). Na(+) is bound by residues glycine 78 and threonine 81.

The protein belongs to the fluoride channel Fluc/FEX (TC 1.A.43) family.

Its subcellular location is the cell inner membrane. It catalyses the reaction fluoride(in) = fluoride(out). Na(+) is not transported, but it plays an essential structural role and its presence is essential for fluoride channel function. Its function is as follows. Fluoride-specific ion channel. Important for reducing fluoride concentration in the cell, thus reducing its toxicity. This Thermotoga maritima (strain ATCC 43589 / DSM 3109 / JCM 10099 / NBRC 100826 / MSB8) protein is Fluoride-specific ion channel FluC.